A 132-amino-acid polypeptide reads, in one-letter code: Small ribosomal subunit protein eS12 (132 aa).

The protein belongs to the eukaryotic ribosomal protein eS12 family.

This Oreochromis niloticus (Nile tilapia) protein is Small ribosomal subunit protein eS12 (rps12).